We begin with the raw amino-acid sequence, 681 residues long: PWWP domain-containing DNA repair factor 3B (681 aa).

The segment covering 102–121 (NLSQESMSEEQPTATASENV) has biased composition (polar residues). 3 disordered regions span residues 102–144 (NLSQ…TQED), 166–200 (HTTGESMPSEMDTKATENLGCCQTDPSLADEDDKK), and 285–304 (QNQSSVESDVGAETSTAGCS). S128 carries the post-translational modification Phosphoserine. Positions 285-302 (QNQSSVESDVGAETSTAG) are enriched in polar residues. A PWWP domain is found at 377 to 438 (TGMIVWFKYQ…KKYDCKEKQA (62 aa)).

Belongs to the PWWP3A family.

The polypeptide is PWWP domain-containing DNA repair factor 3B (Pwwp3b) (Mus musculus (Mouse)).